The chain runs to 184 residues: MKNITDSFLCLGSWPSAGSFVFNTDILATNPINLSVVLGVLVFFGKGVLSDLLDNRKQKIWRTIQNSEELQEEAIEQLEKAQARLRKVETEADRFRVNGYSEIKREKLNLIHSIYTTLEQLENYKNEAIDFEQQRVINQVRQRVLQQALQGALGTLNSCLNNELHLRTVSANIGMFGTMKEKNN.

The helical transmembrane segment at 27–49 (LATNPINLSVVLGVLVFFGKGVL) threads the bilayer.

Belongs to the ATPase B chain family. F-type ATPases have 2 components, F(1) - the catalytic core - and F(0) - the membrane proton channel. F(1) has five subunits: alpha(3), beta(3), gamma(1), delta(1), epsilon(1). F(0) has four main subunits: a(1), b(1), b'(1) and c(10-14). The alpha and beta chains form an alternating ring which encloses part of the gamma chain. F(1) is attached to F(0) by a central stalk formed by the gamma and epsilon chains, while a peripheral stalk is formed by the delta, b and b' chains.

Its subcellular location is the plastid. It is found in the chloroplast thylakoid membrane. Its function is as follows. F(1)F(0) ATP synthase produces ATP from ADP in the presence of a proton or sodium gradient. F-type ATPases consist of two structural domains, F(1) containing the extramembraneous catalytic core and F(0) containing the membrane proton channel, linked together by a central stalk and a peripheral stalk. During catalysis, ATP synthesis in the catalytic domain of F(1) is coupled via a rotary mechanism of the central stalk subunits to proton translocation. Component of the F(0) channel, it forms part of the peripheral stalk, linking F(1) to F(0). The protein is ATP synthase subunit b, chloroplastic of Phaseolus vulgaris (Kidney bean).